A 475-amino-acid chain; its full sequence is Coronin-2B (475 aa).

WD repeat units lie at residues 80–120 (GHQG…LKRN), 130–172 (GHSR…KMID), 174–212 (HTDVILCMSFNTDGSLMATTCKDKKLRVLEPRSGRVLQE), 215–258 (CKNH…MPVT), and 260–303 (EEID…PYLT). Positions 431–470 (NELLRMFFKQQEEIRRLKEQLSQRDLLVRQLELELKNLRN) form a coiled coil.

This sequence belongs to the WD repeat coronin family.

The protein resides in the cytoplasm. It is found in the cytoskeleton. Functionally, may play a role in the reorganization of neuronal actin structure. This Xenopus laevis (African clawed frog) protein is Coronin-2B (coro2b).